Here is a 193-residue protein sequence, read N- to C-terminus: dTTP/UTP pyrophosphatase (193 aa).

Asp-71 serves as the catalytic Proton acceptor.

The protein belongs to the Maf family. YhdE subfamily. It depends on a divalent metal cation as a cofactor.

Its subcellular location is the cytoplasm. The catalysed reaction is dTTP + H2O = dTMP + diphosphate + H(+). The enzyme catalyses UTP + H2O = UMP + diphosphate + H(+). In terms of biological role, nucleoside triphosphate pyrophosphatase that hydrolyzes dTTP and UTP. May have a dual role in cell division arrest and in preventing the incorporation of modified nucleotides into cellular nucleic acids. The protein is dTTP/UTP pyrophosphatase of Dictyoglomus turgidum (strain DSM 6724 / Z-1310).